The primary structure comprises 912 residues: MSSFRSHCPHLDSVGEITKEDLIQKSHGSCQDCKVRGPNLWACLENRCSYVGCGESQVDHSTIHSQETKHYLTVNLTTLRVWCYACSKEVFLDRKLGTQPSLPHVKPLHQIQENGVQDFKIPSNTTLKTPLVAVFDDLDIEVEEEDELKARGLTGLKNIGNTCYMNAALQALSNCPPLTQFFLDCGGLARTDKKPAICKSYLKLMTELWHKSRPGSVVPTTLFQGIKTVNPTFRGYSQQDAQEFLRCLMDLLHEELKEQVMEVEEDPQTIMTEETMEEDKSQSDVDFQSCESCSSSDKAENENGSRSFSEDNNETTMLIQDDENNSEMSKDWQKEKMCNKINKVHSEGELDKDRDSVSETADLNNQETVKVQIHSRASEYITDVHLNDLSTPQILPSNEGVNPRLSASPPKSGNLWPGLPPTHKKVQSALSPKRKKQHKKYRSVISDIFDGTIISSVQCLTCDRVSVTLETFQDLSLPIPGKEDLAKLHSSSHPTSIVKAGSCGEAYAPQGWIAFFMEYVKRFVVSCVPSWFWGPVVTLQDCLAAFFARDELKGDNMYSCEKCKKLRNGVKFCKVQKFPEILCIHLKRFRHELMFSTKISTHVSFPLEGLDLQPFLAKDSPVQIVTYDLLSVICHHGTASSGHYIAYCRNNLNNLWYEFDDQSVTEVSESTVQNAEAYVLFYRKSSEEAQKERRRISNLLNIMEPSLLQFYISRQWLNKFKTFAEPGPISNNDFLCIHGGVPPRKAGYIEDLVLMLPQNIWDNLYSRYGGGPAVNHLYICHTCQIEAEKIEKRRKTELEIFIRLNRAFQEEDSPATFYCISMQWFREWESFVKGKDGDPPGPIDNTKIAVTKCGNVILRQGADSGQISEETWNFLQSIYGGGPEVILRPPVVHVDPDAVQAEEKIEVETRSL.

The UBP-type zinc finger occupies 6 to 109 (SHCPHLDSVG…PSLPHVKPLH (104 aa)). Cysteine 8, histidine 10, cysteine 30, cysteine 33, cysteine 43, cysteine 48, cysteine 53, histidine 60, histidine 64, histidine 70, cysteine 83, and cysteine 86 together coordinate Zn(2+). One can recognise a USP domain in the interval 154-685 (TGLKNIGNTC…EAYVLFYRKS (532 aa)). Cysteine 163 serves as the catalytic Nucleophile. The tract at residues 274-334 (ETMEEDKSQS…NSEMSKDWQK (61 aa)) is disordered. Over residues 284–296 (DVDFQSCESCSSS) the composition is skewed to polar residues. A phosphoserine mark is found at serine 346 and serine 408. The interval 403–433 (PRLSASPPKSGNLWPGLPPTHKKVQSALSPK) is disordered. Positions 422–433 (THKKVQSALSPK) are enriched in basic residues. Histidine 643 (proton acceptor) is an active-site residue. DUSP domains follow at residues 687 to 780 (EEAQ…LYIC) and 788 to 891 (EKIE…RPPV).

The protein belongs to the peptidase C19 family. USP20/USP33 subfamily. Interacts with VHL, leading to its ubiquitination and subsequent degradation. Interacts with ARRB1 and ARRB2. Interacts with ADRB2. Interacts with DIO2. Interacts with ROBO1. Interacts with SELENBP1; in a selenium-dependent manner. Interacts with CCP110. In terms of processing, ubiquitinated via a VHL-dependent pathway for proteasomal degradation.

It localises to the cytoplasm. The protein localises to the perinuclear region. Its subcellular location is the cytoskeleton. It is found in the microtubule organizing center. The protein resides in the centrosome. The catalysed reaction is Thiol-dependent hydrolysis of ester, thioester, amide, peptide and isopeptide bonds formed by the C-terminal Gly of ubiquitin (a 76-residue protein attached to proteins as an intracellular targeting signal).. In terms of biological role, deubiquitinating enzyme involved in various processes such as centrosome duplication, cellular migration and beta-2 adrenergic receptor/ADRB2 recycling. Involved in regulation of centrosome duplication by mediating deubiquitination of CCP110 in S and G2/M phase, leading to stabilize CCP110 during the period which centrioles duplicate and elongate. Involved in cell migration via its interaction with intracellular domain of ROBO1, leading to regulate the Slit signaling. Plays a role in commissural axon guidance cross the ventral midline of the neural tube in a Slit-dependent manner, possibly by mediating the deubiquitination of ROBO1. Acts as a regulator of G-protein coupled receptor (GPCR) signaling by mediating the deubiquitination of beta-arrestins (ARRB1 and ARRB2) and beta-2 adrenergic receptor (ADRB2). Plays a central role in ADRB2 recycling and resensitization after prolonged agonist stimulation by constitutively binding ADRB2, mediating deubiquitination of ADRB2 and inhibiting lysosomal trafficking of ADRB2. Upon dissociation, it is probably transferred to the translocated beta-arrestins, leading to beta-arrestins deubiquitination and disengagement from ADRB2. This suggests the existence of a dynamic exchange between the ADRB2 and beta-arrestins. Deubiquitinates DIO2, thereby regulating thyroid hormone regulation. Mediates deubiquitination of both 'Lys-48'- and 'Lys-63'-linked polyubiquitin chains. The protein is Ubiquitin carboxyl-terminal hydrolase 33 (USP33) of Bos taurus (Bovine).